Reading from the N-terminus, the 318-residue chain is CRISPR-associated endonuclease Cas1 1 (318 aa).

Glu160, His225, and Glu240 together coordinate Mn(2+).

It belongs to the CRISPR-associated endonuclease Cas1 family. In terms of assembly, homodimer, forms a heterotetramer with a Cas2 homodimer. Requires Mg(2+) as cofactor. It depends on Mn(2+) as a cofactor.

Functionally, CRISPR (clustered regularly interspaced short palindromic repeat), is an adaptive immune system that provides protection against mobile genetic elements (viruses, transposable elements and conjugative plasmids). CRISPR clusters contain spacers, sequences complementary to antecedent mobile elements, and target invading nucleic acids. CRISPR clusters are transcribed and processed into CRISPR RNA (crRNA). Acts as a dsDNA endonuclease. Involved in the integration of spacer DNA into the CRISPR cassette. This is CRISPR-associated endonuclease Cas1 1 from Thermodesulfovibrio yellowstonii (strain ATCC 51303 / DSM 11347 / YP87).